A 739-amino-acid chain; its full sequence is BEL1-like homeodomain protein 2 (739 aa).

Disordered regions lie at residues 23–73 and 143–222; these read SQDY…ESSV and LMNP…NSQT. Positions 41–58 are enriched in polar residues; the sequence is NFSNGFDRSDSPNLTTQQ. A compositionally biased stretch (pro residues) spans 145-155; that stretch reads NPPPPQQPPSP. Low complexity predominate over residues 179–190; it reads TNTTHHQNYTNH. The segment at 316-332 is SR/KY domain; it reads SRYTTAAQELLEEFCSV. A disordered region spans residues 341–378; the sequence is KLGNSSNPNTCGGDGGGSSPSSAGANKEHPPLSASDRI. The BELL domain stretch occupies residues 376–447; that stretch reads DRIEHQRRKV…CLKDAVAAQL (72 aa). Positions 498–560 form a DNA-binding region, homeobox; that stretch reads AWRPQRGLPE…NARVRLWKPM (63 aa). A disordered region spans residues 567-627; sequence QESKEREREE…TAPDASDADA (61 aa). Residues 576 to 585 show a composition bias toward acidic residues; sequence EELEENEEDQ. Basic and acidic residues predominate over residues 586–596; it reads ETKNSNDDKST. Residues 597–627 show a composition bias toward low complexity; sequence KSNNNESNFTAVRTTSQTPTTTAPDASDADA.

This sequence belongs to the TALE/BELL homeobox family. May form heterodimeric complexes with TALE/KNOX proteins STM, KNAT1/BP, KNAT2 and KNAT5. Interacts with OFP1, OFP2, OFP4 and OFP5. Interacts with KNATM, isoform KNATM-B. Expressed in lateral organs.

It is found in the nucleus. Transcription factor that establishes leaf shape by repressing growth in specific subdomains of the leaf. Negatively regulates knox homeobox gene KNAT1/BP expression. This is BEL1-like homeodomain protein 2 (BLH2) from Arabidopsis thaliana (Mouse-ear cress).